The sequence spans 153 residues: Cytochrome c-type biogenesis protein CcmE (153 aa).

Over 1–7 (MTRKKRR) the chain is Cytoplasmic. Residues 8 to 28 (LYFVVLGMLALFAAAGLTLTA) traverse the membrane as a helical; Signal-anchor for type II membrane protein segment. The Periplasmic portion of the chain corresponds to 29–153 (FQDNLVFFYS…PPTAAAAPAP (125 aa)). 2 residues coordinate heme: His-121 and Tyr-125. The disordered stretch occupies residues 132–153 (ESLKASGKWQHGPPTAAAAPAP). Residues 144–153 (PPTAAAAPAP) show a composition bias toward low complexity.

It belongs to the CcmE/CycJ family.

Its subcellular location is the cell inner membrane. Its function is as follows. Heme chaperone required for the biogenesis of c-type cytochromes. Transiently binds heme delivered by CcmC and transfers the heme to apo-cytochromes in a process facilitated by CcmF and CcmH. The protein is Cytochrome c-type biogenesis protein CcmE of Rhodospirillum rubrum (strain ATCC 11170 / ATH 1.1.1 / DSM 467 / LMG 4362 / NCIMB 8255 / S1).